A 206-amino-acid polypeptide reads, in one-letter code: 3-demethoxyubiquinol 3-hydroxylase (206 aa).

The Fe cation site is built by glutamate 55, glutamate 85, histidine 88, glutamate 137, glutamate 169, and histidine 172.

It belongs to the COQ7 family. Fe cation is required as a cofactor.

It is found in the cell membrane. It carries out the reaction a 5-methoxy-2-methyl-3-(all-trans-polyprenyl)benzene-1,4-diol + AH2 + O2 = a 3-demethylubiquinol + A + H2O. The protein operates within cofactor biosynthesis; ubiquinone biosynthesis. Catalyzes the hydroxylation of 2-nonaprenyl-3-methyl-6-methoxy-1,4-benzoquinol during ubiquinone biosynthesis. In Laribacter hongkongensis (strain HLHK9), this protein is 3-demethoxyubiquinol 3-hydroxylase.